We begin with the raw amino-acid sequence, 160 residues long: Phosphopantetheine adenylyltransferase (160 aa).

Thr10 is a substrate binding site. Residues 10 to 11 (TF) and His18 each bind ATP. Lys42, Leu74, and Arg88 together coordinate substrate. ATP is bound by residues 89–91 (GLR), Glu99, and 124–130 (NSFISST).

Belongs to the bacterial CoaD family. In terms of assembly, homohexamer. It depends on Mg(2+) as a cofactor.

The protein localises to the cytoplasm. The catalysed reaction is (R)-4'-phosphopantetheine + ATP + H(+) = 3'-dephospho-CoA + diphosphate. The protein operates within cofactor biosynthesis; coenzyme A biosynthesis; CoA from (R)-pantothenate: step 4/5. Functionally, reversibly transfers an adenylyl group from ATP to 4'-phosphopantetheine, yielding dephospho-CoA (dPCoA) and pyrophosphate. The polypeptide is Phosphopantetheine adenylyltransferase (Pseudoalteromonas atlantica (strain T6c / ATCC BAA-1087)).